Reading from the N-terminus, the 329-residue chain is Ribosomal RNA small subunit methyltransferase C (329 aa).

Belongs to the methyltransferase superfamily. RsmC family. Monomer.

Its subcellular location is the cytoplasm. It catalyses the reaction guanosine(1207) in 16S rRNA + S-adenosyl-L-methionine = N(2)-methylguanosine(1207) in 16S rRNA + S-adenosyl-L-homocysteine + H(+). Functionally, specifically methylates the guanine in position 1207 of 16S rRNA in the 30S particle. This chain is Ribosomal RNA small subunit methyltransferase C, found in Actinobacillus pleuropneumoniae serotype 7 (strain AP76).